Consider the following 303-residue polypeptide: Aspartate carbamoyltransferase catalytic subunit (303 aa).

2 residues coordinate carbamoyl phosphate: Arg-49 and Thr-50. Position 77 (Lys-77) interacts with L-aspartate. Carbamoyl phosphate contacts are provided by Arg-99, His-126, and Gln-129. 2 residues coordinate L-aspartate: Arg-159 and Arg-211. The carbamoyl phosphate site is built by Ser-252 and Pro-253.

Belongs to the aspartate/ornithine carbamoyltransferase superfamily. ATCase family. In terms of assembly, heterododecamer (2C3:3R2) of six catalytic PyrB chains organized as two trimers (C3), and six regulatory PyrI chains organized as three dimers (R2).

The enzyme catalyses carbamoyl phosphate + L-aspartate = N-carbamoyl-L-aspartate + phosphate + H(+). Its pathway is pyrimidine metabolism; UMP biosynthesis via de novo pathway; (S)-dihydroorotate from bicarbonate: step 2/3. Functionally, catalyzes the condensation of carbamoyl phosphate and aspartate to form carbamoyl aspartate and inorganic phosphate, the committed step in the de novo pyrimidine nucleotide biosynthesis pathway. The polypeptide is Aspartate carbamoyltransferase catalytic subunit (Listeria monocytogenes serovar 1/2a (strain ATCC BAA-679 / EGD-e)).